The sequence spans 347 residues: NADH-ubiquinone oxidoreductase chain 2 (347 aa).

A run of 9 helical transmembrane segments spans residues 5–22 (ILTI…MVLI), 26–45 (WLTV…PILM), 60–80 (FLTQ…NLLL), 150–170 (NPNL…WGGL), 178–198 (ILAY…TYNP), 200–220 (LMML…MLFM), 242–262 (SLIL…GFIP), 274–294 (NMII…YFYM), and 324–344 (TLLP…PMML).

It belongs to the complex I subunit 2 family. Core subunit of respiratory chain NADH dehydrogenase (Complex I) which is composed of 45 different subunits. Interacts with TMEM242.

Its subcellular location is the mitochondrion inner membrane. It catalyses the reaction a ubiquinone + NADH + 5 H(+)(in) = a ubiquinol + NAD(+) + 4 H(+)(out). Core subunit of the mitochondrial membrane respiratory chain NADH dehydrogenase (Complex I) which catalyzes electron transfer from NADH through the respiratory chain, using ubiquinone as an electron acceptor. Essential for the catalytic activity and assembly of complex I. The protein is NADH-ubiquinone oxidoreductase chain 2 of Martes flavigula (Yellow-throated marten).